We begin with the raw amino-acid sequence, 366 residues long: GTP cyclohydrolase 1 type 2 homolog (366 aa).

A divalent metal cation contacts are provided by His-64, His-65, Asp-102, His-326, and Glu-329.

This sequence belongs to the GTP cyclohydrolase I type 2/NIF3 family. In terms of assembly, homohexamer.

The chain is GTP cyclohydrolase 1 type 2 homolog from Staphylococcus epidermidis (strain ATCC 35984 / DSM 28319 / BCRC 17069 / CCUG 31568 / BM 3577 / RP62A).